Consider the following 353-residue polypeptide: Stomatin-like protein 2, mitochondrial (353 aa).

Residues 1-28 (MLARAARGTGALLLRGSVQASGRVPRRA) constitute a mitochondrion transit peptide. Residue serine 17 is modified to Phosphoserine; by PKC/PRKCZ. Tyrosine 124 carries the phosphotyrosine modification. Position 145 is an N6-acetyllysine; alternate (lysine 145). An N6-succinyllysine; alternate modification is found at lysine 145. Positions 215 to 252 (INVAEGKKQAQILASEAEKAEQINQAAGEASAVLAKAK) form a coiled coil. At lysine 233 the chain carries N6-acetyllysine. A disordered region spans residues 324–353 (VPGAQNSSQSRRDVQATDTSIEELGRVKLS). Residue serine 330 is modified to Phosphoserine.

It belongs to the band 7/mec-2 family. In terms of assembly, forms homooligomers. Interacts with MFN2; may form heterooligomers. Interacts with PHB1 and PHB2; recruits them to cardiolipin-enriched mitochondrial membranes and stabilizes them. Interacts with CACNA2D2.

Its subcellular location is the cell membrane. The protein localises to the mitochondrion. It is found in the mitochondrion inner membrane. The protein resides in the mitochondrion intermembrane space. It localises to the membrane raft. Its subcellular location is the cytoplasm. The protein localises to the cytoskeleton. Functionally, mitochondrial protein that probably regulates the biogenesis and the activity of mitochondria. Stimulates cardiolipin biosynthesis, binds cardiolipin-enriched membranes where it recruits and stabilizes some proteins including prohibitin and may therefore act in the organization of functional microdomains in mitochondrial membranes. Through regulation of the mitochondrial function may play a role into several biological processes including cell migration, cell proliferation, T-cell activation, calcium homeostasis and cellular response to stress. May play a role in calcium homeostasis through negative regulation of calcium efflux from mitochondria. Required for mitochondrial hyperfusion a pro-survival cellular response to stress which results in increased ATP production by mitochondria. May also regulate the organization of functional domains at the plasma membrane and play a role in T-cell activation through association with the T-cell receptor signaling complex and its regulation. The protein is Stomatin-like protein 2, mitochondrial (Stoml2) of Mus musculus (Mouse).